Here is a 166-residue protein sequence, read N- to C-terminus: 2-C-methyl-D-erythritol 2,4-cyclodiphosphate synthase (166 aa).

A divalent metal cation contacts are provided by aspartate 12 and histidine 14. 4-CDP-2-C-methyl-D-erythritol 2-phosphate contacts are provided by residues 12–14 (DSH) and 38–39 (HS). An a divalent metal cation-binding site is contributed by histidine 46. Residues 60 to 62 (DIG), 65 to 69 (FPDTD), and arginine 146 each bind 4-CDP-2-C-methyl-D-erythritol 2-phosphate.

It belongs to the IspF family. In terms of assembly, homotrimer. The cofactor is a divalent metal cation.

The catalysed reaction is 4-CDP-2-C-methyl-D-erythritol 2-phosphate = 2-C-methyl-D-erythritol 2,4-cyclic diphosphate + CMP. It functions in the pathway isoprenoid biosynthesis; isopentenyl diphosphate biosynthesis via DXP pathway; isopentenyl diphosphate from 1-deoxy-D-xylulose 5-phosphate: step 4/6. Involved in the biosynthesis of isopentenyl diphosphate (IPP) and dimethylallyl diphosphate (DMAPP), two major building blocks of isoprenoid compounds. Catalyzes the conversion of 4-diphosphocytidyl-2-C-methyl-D-erythritol 2-phosphate (CDP-ME2P) to 2-C-methyl-D-erythritol 2,4-cyclodiphosphate (ME-CPP) with a corresponding release of cytidine 5-monophosphate (CMP). This is 2-C-methyl-D-erythritol 2,4-cyclodiphosphate synthase from Gemmatimonas aurantiaca (strain DSM 14586 / JCM 11422 / NBRC 100505 / T-27).